An 839-amino-acid polypeptide reads, in one-letter code: MNMARQGLFQTVGSGLDHILSLADVEEEQMIQSVDRTAVTGASYFTSVDQSSVHTAEVGSHQSEPLKTSVDKPGSKKTQGEKFFLIHSADWLSTHALFHEVAKLDVVSLLYNEQFAVQGLLRYHTYARFGIEIQVQINPTPFQQGGLICAMVPGDQGYGSIASLTVYPHGLLNCNINNVVRIKVPFIYTRGAYHFKDPQYPVWELTIRVWSEFNIGTGTSAYTSLNVLARFTDLELHGLTPLSTQMMRNEFRVSTTENVVNLSNYEDARAKMSFALDQENWRSDPSEGGGIKITHFSTWTSIPTLAAQFAFNASASVGQQIKVIPVDPYFYQMTNSNPDQKYITALASICQMFCFWRGDLVFDFQVFPTKYHSGRLQFCFVPGNELIEVTSITLKQATTAPCAVMDITGVQSTLRFRVPWISDTPYRVNCYIKSSHQKGEYTAIEKLIVYCYNRLTSPSNVASHVRVNVYLSAINLECFAPLYHAMDVTSQTGDDSGGFSTTVSTEQNVPDPQVGITTPKDLKGKANKGKMDVSGVQAPVGAITTIEDPVLAKKVPETFPELKPGESRHTSDHMSVYKFMGRSHFLCTFTFNANNREYTFPITLSSTSNPPHGSPSTLRWFFNLFQLYRGPLDLTIIITGATDVDGMAWFTPVGLAVDTPWVEKQSALTIDYKTALGAIRFNTRRTGNIQIRLPWYSYLYAVSGALDGLGDTTDSTFGLVSIQIANYNHSDEYLSFSCYLSVTEQSEFFFPRAPLNSSAMMTSENMLDRIAGGDLESSVDDPRTDEDRRFESHIEKKPYKELRLEVGKQRFKYAREELSNEILPPPRKLKGLFSQSKIS.

The span at 55–66 (TAEVGSHQSEPL) shows a compositional bias: polar residues. The tract at residues 55–76 (TAEVGSHQSEPLKTSVDKPGSK) is disordered. Short sequence motifs ((L)YPX(n)L motif) lie at residues 167-171 (YPHGL) and 200-205 (YPVWEL). The segment covering 496–510 (SGGFSTTVSTEQNVP) has biased composition (polar residues). 2 disordered regions span residues 496–530 (SGGF…NKGK) and 773–792 (GDLE…RFES). The involved in P1-2A pentamerization stretch occupies residues 766 to 836 (MLDRIAGGDL…RKLKGLFSQS (71 aa)). Residues 780 to 792 (DDPRTDEDRRFES) are compositionally biased toward basic and acidic residues.

Belongs to the picornaviridae polyprotein family. In terms of assembly, homodimer. Homomultimer; probably interacts with membranes in a multimeric form. Seems to assemble into amyloid-like fibers. Homopentamer. Homooligomer. As to quaternary structure, interacts with capsid protein VP2. Interacts with capsid protein VP3. In terms of assembly, interacts with capsid protein VP1. Interacts with capsid protein VP3. Interacts with capsid protein VP1. Interacts with capsid protein VP2. Post-translationally, specific enzymatic cleavages by viral protease in vivo yield a variety of precursors and mature proteins. Polyprotein processing intermediates are produced, such as P1-2A which is a functional precursor of the structural proteins, VP0 which is a VP4-VP2 precursor, VP1-2A precursor, 3ABC precursor which is a stable and catalytically active precursor of 3A, 3B and 3C proteins, 3AB and 3CD precursors. The assembly signal 2A is removed from VP1-2A by a host protease, possibly host Cathepsin L. This cleavage occurs over a region of 3 amino-acids probably generating VP1 proteins with heterogeneous C-termini. During virion maturation, immature virions are rendered infectious following cleavage of VP0 into VP4 and VP2. This maturation seems to be an autocatalytic event triggered by the presence of RNA in the capsid and is followed by a conformational change of the particle. In terms of processing, the assembly signal 2A is removed from VP1-2A by a host protease, possibly host Cathepsin L in naked virions. This cleavage does not occur in enveloped virions. This cleavage occurs over a region of 3 amino-acids probably generating VP1 proteins with heterogeneous C-termini. Post-translationally, unlike other picornaviruses, does not seem to be myristoylated.

The protein localises to the virion. Its subcellular location is the host endosome. It is found in the host multivesicular body. The protein resides in the host membrane. Functionally, capsid proteins VP1, VP2, and VP3 form a closed capsid enclosing the viral positive strand RNA genome. All these proteins contain a beta-sheet structure called beta-barrel jelly roll. Together they form an icosahedral capsid (T=3) composed of 60 copies of each VP1, VP2, and VP3, with a diameter of approximately 300 Angstroms. VP1 is situated at the 12 fivefold axes, whereas VP2 and VP3 are located at the quasi-sixfold axes. The naked capsid interacts with the host receptor HAVCR1 to provide virion attachment to and probably entry into the target cell. In terms of biological role, VP0 precursor is a component of the immature procapsids. Plays a role in the assembly of the 12 pentamers into an icosahedral structure. Has not been detected in mature virions, supposedly owing to its small size. Its function is as follows. Precursor component of immature procapsids that corresponds to an extended form of the structural protein VP1. After maturation, possibly by the host Cathepsin L, the assembly signal 2A is cleaved to give rise to the mature VP1 protein. Functionally, affects membrane integrity and causes an increase in membrane permeability. In terms of biological role, functions as a viroporin. Affects membrane integrity and causes an increase in membrane permeability. Involved in host intracellular membrane rearrangements probably to give rise to the viral factories. Does not disrupt calcium homeostasis or glycoprotein trafficking. Antagonizes the innate immune response of the host by suppressing IFN-beta synthesis, which it achieves by interfering with the RIG-I/IFIH1 pathway. This Callithrix (Owl-faced monkey) protein is Genome polyprotein.